A 554-amino-acid chain; its full sequence is Glutamine--tRNA ligase (554 aa).

Positions 34-44 match the 'HIGH' region motif; the sequence is PEPNGYLHIGH. ATP is bound by residues 35-37 and 41-47; these read EPN and HIGHAKS. 2 residues coordinate L-glutamine: Asp67 and Tyr212. ATP contacts are provided by residues Thr231, 261–262, and 269–271; these read RL and MSK. The short motif at 268–272 is the 'KMSKS' region element; that stretch reads VMSKR.

This sequence belongs to the class-I aminoacyl-tRNA synthetase family. As to quaternary structure, monomer.

Its subcellular location is the cytoplasm. The enzyme catalyses tRNA(Gln) + L-glutamine + ATP = L-glutaminyl-tRNA(Gln) + AMP + diphosphate. This chain is Glutamine--tRNA ligase, found in Shigella boydii serotype 4 (strain Sb227).